Reading from the N-terminus, the 444-residue chain is Trigger factor (444 aa).

A PPIase FKBP-type domain is found at 185 to 270; the sequence is GDKLIIDFEG…VNEIQIAKDF (86 aa).

It belongs to the FKBP-type PPIase family. Tig subfamily.

It localises to the cytoplasm. It catalyses the reaction [protein]-peptidylproline (omega=180) = [protein]-peptidylproline (omega=0). In terms of biological role, involved in protein export. Acts as a chaperone by maintaining the newly synthesized protein in an open conformation. Functions as a peptidyl-prolyl cis-trans isomerase. In Wolbachia pipientis wMel, this protein is Trigger factor.